The chain runs to 79 residues: Conotoxin ArMKLT2-031 (79 aa).

Positions 1–22 (MKLTCVLIIAVLFLTACQLTTG) are cleaved as a signal peptide. Positions 23–46 (ETYSRGEQKDHALRSTDKNSKLTR) are excised as a propeptide. Gln-47 is modified (pyrrolidone carboxylic acid). Cystine bridges form between Cys-48–Cys-62, Cys-55–Cys-66, and Cys-61–Cys-73.

It belongs to the conotoxin O1 superfamily. Expressed by the venom duct.

Its subcellular location is the secreted. This chain is Conotoxin ArMKLT2-031, found in Conus arenatus (Sand-dusted cone).